The primary structure comprises 85 residues: Putative regulatory protein Dtur_1444 (85 aa).

It belongs to the RemA family.

This is Putative regulatory protein Dtur_1444 from Dictyoglomus turgidum (strain DSM 6724 / Z-1310).